The sequence spans 314 residues: Leucine-rich repeat-containing protein 59 (314 aa).

The Cytoplasmic segment spans residues 1–247 (MNKGKIENIK…VPKAKRSICS (247 aa)). LRR repeat units follow at residues 14–35 (DGNE…ELAA), 38–60 (KATF…CSLT), 61–82 (HLIK…IGQL), 84–106 (NLQH…SQLK), and 107–126 (SLKW…AKAA). Positions 146–216 (MKVLQEEAEK…AVAAQEQQKK (71 aa)) form a coiled coil. Disordered regions lie at residues 165 to 197 (REQE…KERK) and 212 to 237 (EQQK…APES). Basic residues predominate over residues 215–225 (KKKKEEKKKKA). The chain crosses the membrane as a helical span at residues 248 to 268 (LFFSLLLKLVLLLVIGVSSVV). The Lumenal portion of the chain corresponds to 269–314 (AVCQLTELRKEAFCIPLNVHFEETVRWAQGLDVVQQVIQKMSDLRT).

As to quaternary structure, interacts with SGO1.

The protein resides in the microsome membrane. Its subcellular location is the endoplasmic reticulum membrane. It localises to the nucleus envelope. Functionally, required for nuclear import of FGF1. The protein is Leucine-rich repeat-containing protein 59 (lrrc59) of Danio rerio (Zebrafish).